Here is a 329-residue protein sequence, read N- to C-terminus: MTQLFYDTDADLSLLNNKTIAIIGYGSQGHAHALNLKDSGMDVIVGLYKGSKSESKAVSDGLQVFSVSEACEKADWIMILLPDEFQKDVYLKEIEPNLKEGKILSFAHGFNIRFGLIKPPSFVDVVMIAPKGPGHTVRWEYQNGQGVPALFAVEQDSSGSARSLAMAYAKGIGGTRAGILETNFKEETETDLFGEQAVLCGGLSELVKSGFETLVEAGYQPELAYFECLHEVKLIVDLMVKGGLSQMRDSISNTAEYGDYVSGKRLINSDTKKEMQKILKDIQDGTFAKNFVEECDKNKPLMTKLREENSKHEIEKVGKGLRSMFSWLK.

The KARI N-terminal Rossmann domain maps to 2–182; sequence TQLFYDTDAD…GGTRAGILET (181 aa). NADP(+)-binding positions include 25–28, Ser-51, Ser-53, and 83–86; these read YGSQ and DEFQ. Residue His-108 is part of the active site. NADP(+) is bound at residue Gly-134. Residues 183-328 form the KARI C-terminal knotted domain; it reads NFKEETETDL…KGLRSMFSWL (146 aa). Positions 191, 195, 227, and 231 each coordinate Mg(2+). Ser-252 provides a ligand contact to substrate.

Belongs to the ketol-acid reductoisomerase family. The cofactor is Mg(2+).

It carries out the reaction (2R)-2,3-dihydroxy-3-methylbutanoate + NADP(+) = (2S)-2-acetolactate + NADPH + H(+). It catalyses the reaction (2R,3R)-2,3-dihydroxy-3-methylpentanoate + NADP(+) = (S)-2-ethyl-2-hydroxy-3-oxobutanoate + NADPH + H(+). It functions in the pathway amino-acid biosynthesis; L-isoleucine biosynthesis; L-isoleucine from 2-oxobutanoate: step 2/4. The protein operates within amino-acid biosynthesis; L-valine biosynthesis; L-valine from pyruvate: step 2/4. Functionally, involved in the biosynthesis of branched-chain amino acids (BCAA). Catalyzes an alkyl-migration followed by a ketol-acid reduction of (S)-2-acetolactate (S2AL) to yield (R)-2,3-dihydroxy-isovalerate. In the isomerase reaction, S2AL is rearranged via a Mg-dependent methyl migration to produce 3-hydroxy-3-methyl-2-ketobutyrate (HMKB). In the reductase reaction, this 2-ketoacid undergoes a metal-dependent reduction by NADPH to yield (R)-2,3-dihydroxy-isovalerate. This chain is Ketol-acid reductoisomerase (NADP(+)), found in Prochlorococcus marinus (strain MIT 9215).